The primary structure comprises 241 residues: Urease accessory protein UreF (241 aa).

This sequence belongs to the UreF family. In terms of assembly, ureD, UreF and UreG form a complex that acts as a GTP-hydrolysis-dependent molecular chaperone, activating the urease apoprotein by helping to assemble the nickel containing metallocenter of UreC. The UreE protein probably delivers the nickel.

It localises to the cytoplasm. Its function is as follows. Required for maturation of urease via the functional incorporation of the urease nickel metallocenter. The chain is Urease accessory protein UreF from Rhodopseudomonas palustris (strain BisB18).